The following is a 202-amino-acid chain: MKALTARQQEVFDLIRDHISQTGMPPTRAEIAQRLGFRSPNAAEEHLKALARKGVIEIVSGASRGIRLLLDEEEGLPLVGRVAAGEPLLAQQHIEGHYQVDPSLFKPNADFLLRVSGMSMKDIGIMDGDLLAVHKTQDVRNGQVVVARIDDEVTVKRLKKQGNKVELLPENSEFKPIVVDLREQSFTIEGLAVGVIRNGEWL.

Residues 28-48 (RAEIAQRLGFRSPNAAEEHLK) constitute a DNA-binding region (H-T-H motif). Active-site for autocatalytic cleavage activity residues include Ser119 and Lys156.

It belongs to the peptidase S24 family. In terms of assembly, homodimer.

The enzyme catalyses Hydrolysis of Ala-|-Gly bond in repressor LexA.. Functionally, represses a number of genes involved in the response to DNA damage (SOS response), including recA and lexA. Binds to the 16 bp palindromic sequence 5'-CTGTATATATATACAG-3'. In the presence of single-stranded DNA, RecA interacts with LexA causing an autocatalytic cleavage which disrupts the DNA-binding part of LexA, leading to derepression of the SOS regulon and eventually DNA repair. This Citrobacter koseri (strain ATCC BAA-895 / CDC 4225-83 / SGSC4696) protein is LexA repressor.